The sequence spans 227 residues: Cytochrome c oxidase subunit 2 (227 aa).

At Met-1 to Ser-14 the chain is on the mitochondrial intermembrane side. The chain crosses the membrane as a helical span at residues Pro-15–Met-45. The Mitochondrial matrix portion of the chain corresponds to Leu-46 to Gln-59. A helical transmembrane segment spans residues Glu-60–Met-87. At Asp-88–Leu-227 the chain is on the mitochondrial intermembrane side. Cu cation-binding residues include His-161, Cys-196, Glu-198, Cys-200, His-204, and Met-207. Mg(2+) is bound at residue Glu-198. Phosphotyrosine is present on Tyr-218.

Belongs to the cytochrome c oxidase subunit 2 family. Component of the cytochrome c oxidase (complex IV, CIV), a multisubunit enzyme composed of 14 subunits. The complex is composed of a catalytic core of 3 subunits MT-CO1, MT-CO2 and MT-CO3, encoded in the mitochondrial DNA, and 11 supernumerary subunits COX4I, COX5A, COX5B, COX6A, COX6B, COX6C, COX7A, COX7B, COX7C, COX8 and NDUFA4, which are encoded in the nuclear genome. The complex exists as a monomer or a dimer and forms supercomplexes (SCs) in the inner mitochondrial membrane with NADH-ubiquinone oxidoreductase (complex I, CI) and ubiquinol-cytochrome c oxidoreductase (cytochrome b-c1 complex, complex III, CIII), resulting in different assemblies (supercomplex SCI(1)III(2)IV(1) and megacomplex MCI(2)III(2)IV(2)). Found in a complex with TMEM177, COA6, COX18, COX20, SCO1 and SCO2. Interacts with TMEM177 in a COX20-dependent manner. Interacts with COX20. Interacts with COX16. Requires Cu cation as cofactor.

The protein localises to the mitochondrion inner membrane. It catalyses the reaction 4 Fe(II)-[cytochrome c] + O2 + 8 H(+)(in) = 4 Fe(III)-[cytochrome c] + 2 H2O + 4 H(+)(out). Functionally, component of the cytochrome c oxidase, the last enzyme in the mitochondrial electron transport chain which drives oxidative phosphorylation. The respiratory chain contains 3 multisubunit complexes succinate dehydrogenase (complex II, CII), ubiquinol-cytochrome c oxidoreductase (cytochrome b-c1 complex, complex III, CIII) and cytochrome c oxidase (complex IV, CIV), that cooperate to transfer electrons derived from NADH and succinate to molecular oxygen, creating an electrochemical gradient over the inner membrane that drives transmembrane transport and the ATP synthase. Cytochrome c oxidase is the component of the respiratory chain that catalyzes the reduction of oxygen to water. Electrons originating from reduced cytochrome c in the intermembrane space (IMS) are transferred via the dinuclear copper A center (CU(A)) of subunit 2 and heme A of subunit 1 to the active site in subunit 1, a binuclear center (BNC) formed by heme A3 and copper B (CU(B)). The BNC reduces molecular oxygen to 2 water molecules using 4 electrons from cytochrome c in the IMS and 4 protons from the mitochondrial matrix. This chain is Cytochrome c oxidase subunit 2 (MT-CO2), found in Bubalus depressicornis (Lowland anoa).